A 359-amino-acid polypeptide reads, in one-letter code: Palmitoyltransferase ERF2 (359 aa).

Residues Met-1 to His-21 are disordered. The Cytoplasmic portion of the chain corresponds to Met-1–Pro-75. Residues Leu-76–Ala-96 form a helical membrane-spanning segment. Over His-97–Asn-104 the chain is Lumenal. The chain crosses the membrane as a helical span at residues Gly-105 to Ile-125. The Cytoplasmic portion of the chain corresponds to Arg-126–Phe-217. Residues Lys-173–Leu-223 form the DHHC domain. Cys-203 serves as the catalytic S-palmitoyl cysteine intermediate. Residues Phe-218–Ile-238 form a helical membrane-spanning segment. Over His-239 to Cys-250 the chain is Lumenal. The chain crosses the membrane as a helical span at residues Pro-251–Phe-271. Over Thr-272–Ile-359 the chain is Cytoplasmic.

It belongs to the DHHC palmitoyltransferase family. ERF2/ZDHHC9 subfamily. Interacts with SHR5. Post-translationally, autopalmitoylated.

Its subcellular location is the endoplasmic reticulum membrane. It catalyses the reaction L-cysteinyl-[protein] + hexadecanoyl-CoA = S-hexadecanoyl-L-cysteinyl-[protein] + CoA. In terms of biological role, the ERF2-SHR5 complex is a palmitoyltransferase specific for Ras proteins. Palmitoylates RAS2, which is required for its proper plasma membrane localization. The polypeptide is Palmitoyltransferase ERF2 (ERF2) (Saccharomyces cerevisiae (strain ATCC 204508 / S288c) (Baker's yeast)).